A 415-amino-acid polypeptide reads, in one-letter code: Imidazolonepropionase (415 aa).

2 residues coordinate Fe(3+): H83 and H85. Zn(2+)-binding residues include H83 and H85. 4-imidazolone-5-propanoate is bound by residues R92, Y155, and H188. Residue Y155 participates in N-formimidoyl-L-glutamate binding. Fe(3+) is bound at residue H250. Residue H250 participates in Zn(2+) binding. Q253 is a binding site for 4-imidazolone-5-propanoate. A Fe(3+)-binding site is contributed by D324. Residue D324 participates in Zn(2+) binding. Positions 326 and 328 each coordinate N-formimidoyl-L-glutamate. S329 serves as a coordination point for 4-imidazolone-5-propanoate.

Belongs to the metallo-dependent hydrolases superfamily. HutI family. Requires Zn(2+) as cofactor. Fe(3+) is required as a cofactor.

It localises to the cytoplasm. It catalyses the reaction 4-imidazolone-5-propanoate + H2O = N-formimidoyl-L-glutamate. Its pathway is amino-acid degradation; L-histidine degradation into L-glutamate; N-formimidoyl-L-glutamate from L-histidine: step 3/3. Its function is as follows. Catalyzes the hydrolytic cleavage of the carbon-nitrogen bond in imidazolone-5-propanoate to yield N-formimidoyl-L-glutamate. It is the third step in the universal histidine degradation pathway. The chain is Imidazolonepropionase from Rubrobacter xylanophilus (strain DSM 9941 / JCM 11954 / NBRC 16129 / PRD-1).